The primary structure comprises 398 residues: Putative F-box/kelch-repeat protein At2g29780 (398 aa).

Residues 1–46 (MAIISETSDDGSHGGVPNKKPEELHKNPKEDDHQEEEVENHPPIPR) are disordered. The segment covering 19–32 (KKPEELHKNPKEDD) has biased composition (basic and acidic residues). The F-box domain maps to 43–90 (PIPRQIPQALIRRTVALIKRCHYPSLSLLSKAFRIVISSPELHQTRSS). Kelch repeat units lie at residues 148–195 (KMYV…VING), 196–241 (KIYV…GFVT), 243–289 (VVMQ…VIED), and 295–342 (DPYC…GGKL).

This Arabidopsis thaliana (Mouse-ear cress) protein is Putative F-box/kelch-repeat protein At2g29780.